The sequence spans 90 residues: UPF0386 protein Rru_A2144 (90 aa).

Belongs to the UPF0386 family.

In Rhodospirillum rubrum (strain ATCC 11170 / ATH 1.1.1 / DSM 467 / LMG 4362 / NCIMB 8255 / S1), this protein is UPF0386 protein Rru_A2144.